The chain runs to 296 residues: Urease accessory protein UreD (296 aa).

The protein belongs to the UreD family. In terms of assembly, ureD, UreF and UreG form a complex that acts as a GTP-hydrolysis-dependent molecular chaperone, activating the urease apoprotein by helping to assemble the nickel containing metallocenter of UreC. The UreE protein probably delivers the nickel.

It localises to the cytoplasm. Its function is as follows. Required for maturation of urease via the functional incorporation of the urease nickel metallocenter. The protein is Urease accessory protein UreD of Janthinobacterium sp. (strain Marseille) (Minibacterium massiliensis).